We begin with the raw amino-acid sequence, 514 residues long: MEISWGRAMWRNFLGQSPDWYKLALLVFLIVNPFIFLANPFVAGWLLVAEFIFTLAMALKCYPLLPGGLLAIEAVIIGMTSAAHVREEVAANLEVLLLLMFMVAGIYFMKQLLLFIFTRLLLSIRSKMVLSLAFCVAAAFLSAFLDALTVVAVVISVAVGFYGIYHRVASSRGEENDMLDDSHIDPHYKTVLEQFRGFLRSLMMHAGVGTALGGVMTMVGEPQNLIIAKAAGWHFGDFFLRMSPVTVPVLVCGLLTCMLVEKMRWFGYGETLPEKVRDVLQQFDDQSRKKRTRQDKIKLIVQAVIGVWLVTALALHLAEVGLIGLSVIILATALTGVTDEHAIGKAFTESLPFTALLTVFFSIVAVIIDQHLFAPIIQFVLQASEHAQLTLFYLFNGLLSSISDNVFVGTIYINEAKAAMENGAISLKQFELLAVAINTGTNLPSVATPNGQAAFLFLLTSALAPLIRLSYGRMVWMALPYTIVLTLIGLLCVEFTLAPATEWMTQAGWLATLS.

12 helical membrane-spanning segments follow: residues 23–43, 63–83, 97–117, 120–140, 144–164, 202–222, 238–258, 303–323, 357–377, 391–411, 447–467, and 475–495; these read LALL…PFVA, PLLP…TSAA, LLLM…LFIF, LLLS…AAAF, FLDA…FYGI, LMMH…VGEP, FFLR…LTCM, AVIG…VGLI, LTVF…APII, LFYL…VGTI, ATPN…APLI, and VWMA…CVEF.

This sequence belongs to the NhaB Na(+)/H(+) (TC 2.A.34) antiporter family.

The protein localises to the cell inner membrane. The enzyme catalyses 2 Na(+)(in) + 3 H(+)(out) = 2 Na(+)(out) + 3 H(+)(in). In terms of biological role, na(+)/H(+) antiporter that extrudes sodium in exchange for external protons. This is Na(+)/H(+) antiporter NhaB from Salmonella agona (strain SL483).